The following is a 106-amino-acid chain: Foxo1-corepressor (106 aa).

Residues 1–44 (MGGPTRRHQEEGSAECLGGPSTRAAPGPGLRDFHFTTAGPSKAD) form a disordered region. Positions 78–87 (IGTLYIRLDL) match the Nuclear export signal motif. A Phosphothreonine; by PKA modification is found at Thr93.

As to quaternary structure, interacts with FOXO1 (via N-terminal domain); the interaction is direct, occurs in a forskolin-independent manner that prevents SIRT1 binding to FOXO1. Interacts with FOXO3. Does not interact with FOXO4. Post-translationally, phosphorylated at Thr-93 by PKA, leading to import into the nucleus. In terms of tissue distribution, expressed in adipocytes. Expressed in brown and white adipose tissue but not in liver. Protein levels in brown and white adipose tissues decrease following fasting (at protein level). Expressed in white and brown adipose tissues. Expressed in adipocytes. Not expressed in liver, skeletal muscle and brain.

The protein resides in the cytoplasm. Its subcellular location is the cytosol. It localises to the nucleus. In terms of biological role, regulator of adipocytes that acts by repressing FOXO1 transcriptional activity. Acts by promoting acetylation of FOXO1, both by preventing the interaction between FOXO1 and SIRT1 deacetylase, and by mediating acetyltransferase activity in vitro. Regulates insulin sensitivity and energy metabolism. The sequence is that of Foxo1-corepressor (Fcor) from Mus musculus (Mouse).